A 327-amino-acid chain; its full sequence is Methionine import ATP-binding protein MetN (327 aa).

The region spanning 3-239 (VELKNIEKIY…PKHAVTKELI (237 aa)) is the ABC transporter domain. 36–43 (GYSGAGKS) contacts ATP.

Belongs to the ABC transporter superfamily. Methionine importer (TC 3.A.1.24) family. In terms of assembly, the complex is composed of two ATP-binding proteins (MetN), two transmembrane proteins (MetI) and a solute-binding protein (MetQ).

The protein resides in the cell inner membrane. It carries out the reaction L-methionine(out) + ATP + H2O = L-methionine(in) + ADP + phosphate + H(+). It catalyses the reaction D-methionine(out) + ATP + H2O = D-methionine(in) + ADP + phosphate + H(+). Functionally, part of the ABC transporter complex MetNIQ involved in methionine import. Responsible for energy coupling to the transport system. This chain is Methionine import ATP-binding protein MetN, found in Helicobacter acinonychis (strain Sheeba).